The sequence spans 121 residues: Protein yippee (121 aa).

One can recognise a Yippee domain in the interval 13-110 (KLFNCAQCHT…LEYALITEAE (98 aa)). 4 residues coordinate Zn(2+): cysteine 17, cysteine 20, cysteine 73, and cysteine 76.

This sequence belongs to the yippee family. In terms of assembly, interacts with hemolin.

This chain is Protein yippee, found in Drosophila melanogaster (Fruit fly).